The following is a 1237-amino-acid chain: Zinc finger protein ZFAT (1237 aa).

Residues Phe12–His35 form a C2H2-type 1 zinc finger. Residues Arg50–Arg110 are disordered. Residues Met70–Thr81 show a composition bias toward basic residues. The C2H2-type 2; degenerate zinc-finger motif lies at Leu116 to Asn141. Positions Gly147–Glu188 are disordered. The segment covering Asp156–Gly186 has biased composition (basic and acidic residues). 7 C2H2-type zinc fingers span residues Phe271–His293, Tyr299–His321, Phe326–His349, Gln354–His377, Tyr404–His426, Phe432–His454, and Tyr458–His481. Positions 273, 276, 289, 293, 301, 304, 317, 321, 328, 331, 344, 349, 356, 359, 372, 377, 406, 409, 422, and 426 each coordinate Zn(2+). 4 residues coordinate Zn(2+): Cys460, Cys463, His476, and His481. Disordered stretches follow at residues Val551 to Cys576 and Ser601 to Ala671. The span at Thr565–Ser574 shows a compositional bias: polar residues. The span at Ser601–Asp617 shows a compositional bias: low complexity. 4 C2H2-type zinc fingers span residues Leu737–His759, Tyr765–His788, Leu793–His817, and Tyr825–His848. Zn(2+) contacts are provided by Cys767, Cys770, His783, His788, Cys795, Cys800, His813, His817, Cys827, Cys830, His843, His848, Cys877, Cys880, His894, His898, Cys906, Cys909, His922, His926, Cys934, Cys937, His950, and Leu953. The C2H2-type 14; degenerate zinc-finger motif lies at Met875–His898. 5 C2H2-type zinc fingers span residues Phe904–His926, His932–His954, Phe961–His983, Phe989–His1012, and Leu1036–His1059.

As to expression, detected in spleen and thymus but not in liver, muscle, heart, kidney, brain, bone marrow or pancreas. Expressed in CD19+, CD4+ and CD8+ lymphocytes but not in CD11b+ lymphocytes or peritoneal macrophages (at protein level).

It is found in the nucleus. Its subcellular location is the cytoplasm. The protein localises to the cytosol. May be involved in transcriptional regulation. Overexpression causes down-regulation of a number of genes involved in the immune response. Some genes are also up-regulated. The sequence is that of Zinc finger protein ZFAT (Zfat) from Mus musculus (Mouse).